Here is a 439-residue protein sequence, read N- to C-terminus: MKFRALGLVLLLAVETCKAEEITCEETKPFTCNQTDRFNRKHFDDDFIFEGGKGRGLNVWDGFTHRYPEKGGPDLGNGDSTCGSYEHWQKDIDVMTELGVDGYRFSLAWSRIAPRESNQAGVKYYNDLIDGLLAKNITPFVTLFHWDLPQVLQDEYEGFLNHEIIDDFKDYANLCFKIFGDRVKKWITINQLYTVPTRGYAMGTDAPEPYIVAHNQLLAHAKVVHLYRKKYKPKQRGQIGVVMITRWFVPYDSTQANIDATERNKEFFLGWFMEPLTKGKYPDIMRKLVGRRLPKFNKKEAKLVKGSYDFLGINYYQTQYVYAIPANPPNRLTVLNDSLSAFSYENKDGPIGPWFNADSYYHPRGILNVLEHFKTKYGNPLVYITENGELLILSGCNVKGYFAWCLGDNYELWPSRSFHVSPFYLLHRKDKGAFPSFEA.

A signal peptide spans 1-19 (MKFRALGLVLLLAVETCKA). The N-linked (GlcNAc...) asparagine glycan is linked to N33. A beta-D-glucoside is bound by residues H145, 190-191 (NQ), and Y316. Residue N336 is glycosylated (N-linked (GlcNAc...) asparagine). A beta-D-glucoside contacts are provided by E386 and W404. E386 (nucleophile) is an active-site residue.

It belongs to the glycosyl hydrolase 1 family. Expressed specifically in stamens and petals.

It carries out the reaction a thioglucoside + H2O = a sugar + a thiol.. The protein is Putative myrosinase 3 of Arabidopsis thaliana (Mouse-ear cress).